A 608-amino-acid polypeptide reads, in one-letter code: UvrABC system protein C (608 aa).

Positions 16 to 94 (NRPGVYRMFD…IKEWRPPYNI (79 aa)) constitute a GIY-YIG domain. Positions 204-239 (NALADELNTGMEQAAMRLDFEKAAELRDQVAILRRV) constitute a UVR domain.

The protein belongs to the UvrC family. In terms of assembly, interacts with UvrB in an incision complex.

It is found in the cytoplasm. The UvrABC repair system catalyzes the recognition and processing of DNA lesions. UvrC both incises the 5' and 3' sides of the lesion. The N-terminal half is responsible for the 3' incision and the C-terminal half is responsible for the 5' incision. The sequence is that of UvrABC system protein C from Pseudomonas paraeruginosa (strain DSM 24068 / PA7) (Pseudomonas aeruginosa (strain PA7)).